Reading from the N-terminus, the 340-residue chain is Beta-hexosaminidase (340 aa).

Substrate contacts are provided by residues D60, R68, R127, and 157–158 (KH). Residue H170 is the Proton donor/acceptor of the active site. D242 serves as the catalytic Nucleophile.

It belongs to the glycosyl hydrolase 3 family. NagZ subfamily.

The protein resides in the cytoplasm. The enzyme catalyses Hydrolysis of terminal non-reducing N-acetyl-D-hexosamine residues in N-acetyl-beta-D-hexosaminides.. The protein operates within cell wall biogenesis; peptidoglycan recycling. Functionally, plays a role in peptidoglycan recycling by cleaving the terminal beta-1,4-linked N-acetylglucosamine (GlcNAc) from peptide-linked peptidoglycan fragments, giving rise to free GlcNAc, anhydro-N-acetylmuramic acid and anhydro-N-acetylmuramic acid-linked peptides. In Glaesserella parasuis serovar 5 (strain SH0165) (Haemophilus parasuis), this protein is Beta-hexosaminidase.